The following is a 380-amino-acid chain: Chromo domain-containing protein 2 (380 aa).

Disordered regions lie at residues 14-58 and 100-156; these read ISES…SLYG and KLSP…VPLN. Positions 33–52 are enriched in polar residues; that stretch reads NSINNKSSTASLESPQNGSW. Positions 108 to 119 are enriched in acidic residues; sequence EDSEDKKEEDES. Positions 121–140 are enriched in low complexity; that stretch reads SYKNEFKSSSSASVSSNFEK. One can recognise a Chromo domain in the interval 176 to 238; the sequence is FAVEMILDSR…SRGGKPDLSS (63 aa). A disordered region spans residues 250–273; that stretch reads SNEASYVEKDESSNSDDSISYKRR.

It localises to the nucleus. Functionally, component of the kinetochore which plays a role in stabilizing microtubules and so allowing accurate chromosome segregation. The protein is Chromo domain-containing protein 2 (chp2) of Schizosaccharomyces pombe (strain 972 / ATCC 24843) (Fission yeast).